The following is a 245-amino-acid chain: Uracil-DNA glycosylase (245 aa).

The Proton acceptor role is filled by aspartate 82.

It belongs to the uracil-DNA glycosylase (UDG) superfamily. UNG family.

It is found in the cytoplasm. It catalyses the reaction Hydrolyzes single-stranded DNA or mismatched double-stranded DNA and polynucleotides, releasing free uracil.. Excises uracil residues from the DNA which can arise as a result of misincorporation of dUMP residues by DNA polymerase or due to deamination of cytosine. This Deinococcus geothermalis (strain DSM 11300 / CIP 105573 / AG-3a) protein is Uracil-DNA glycosylase.